A 153-amino-acid polypeptide reads, in one-letter code: MFTESMLFLLLFLLLGLIAKNNSLIIAVAVVILLKLFHVDGKAMEMIQAKGINWGVTIITVAILIPIATGQIGFKDLIDSFKSAAGWIGLGAGIAVSILAKKGVGYMAVDPQVTVSLVFGTILAVVLFRGIAAGPVIAAGIAYMAMQLVAFIK.

Transmembrane regions (helical) follow at residues 6 to 26 (MLFL…SLII), 54 to 74 (WGVT…QIGF), 80 to 100 (SFKS…SILA), and 117 to 137 (LVFG…GPVI).

This sequence belongs to the UPF0756 family.

The protein resides in the cell membrane. This is UPF0756 membrane protein Lm4b_01579 from Listeria monocytogenes serotype 4b (strain CLIP80459).